A 515-amino-acid chain; its full sequence is Cytosolic Fe-S cluster assembly factor NAR1 homolog (515 aa).

Cysteine 19, cysteine 65, cysteine 68, cysteine 71, cysteine 192, cysteine 247, cysteine 428, and cysteine 432 together coordinate [4Fe-4S] cluster.

This sequence belongs to the NARF family.

Component of the cytosolic Fe/S protein assembly machinery. Required for maturation of extramitochondrial Fe/S proteins. May play a role in the transfer of pre-assembled Fe/S clusters to target apoproteins. This Schizosaccharomyces japonicus (strain yFS275 / FY16936) (Fission yeast) protein is Cytosolic Fe-S cluster assembly factor NAR1 homolog.